A 160-amino-acid chain; its full sequence is Putative pre-16S rRNA nuclease (160 aa).

Belongs to the YqgF nuclease family.

It localises to the cytoplasm. Could be a nuclease involved in processing of the 5'-end of pre-16S rRNA. The sequence is that of Putative pre-16S rRNA nuclease from Cereibacter sphaeroides (strain ATCC 17025 / ATH 2.4.3) (Rhodobacter sphaeroides).